The following is a 1102-amino-acid chain: Probable leucine-rich repeat receptor-like protein kinase At5g63930 (1102 aa).

The first 26 residues, 1–26 (MVKEMMKLAVFFISLLLILLISETTG), serve as a signal peptide directing secretion. Residues 27 to 737 (LNLEGQYLLE…GKPGGMRSSK (711 aa)) are Extracellular-facing. N-linked (GlcNAc...) asparagine glycosylation is found at asparagine 54, asparagine 68, asparagine 79, and asparagine 119. LRR repeat units follow at residues 72 to 96 (DPEVLSLNLSSMVLSGKLSPSIGGL), 97 to 120 (VHLKQLDLSYNGLSGKIPKEIGNC), 122 to 144 (SLEILKLNNNQFDGEIPVEIGKL), 145 to 170 (VSLENLIIYNNRISGSLPVEIGNLLS), 172 to 192 (SQLVTYSNNISGQLPRSIGNL), 193 to 216 (KRLTSFRAGQNMISGSLPSEIGGC), 217 to 241 (ESLVMLGLAQNQLSGELPKEIGMLK), 243 to 264 (LSQVILWENEFSGFIPREISNC), 265 to 288 (TSLETLALYKNQLVGPIPKELGDL), 289 to 312 (QSLEFLYLYRNGLNGTIPREIGNL), 314 to 336 (YAIEIDFSENALTGEIPLELGNI), 337 to 360 (EGLELLYLFENQLTGTIPVELSTL), 361 to 383 (KNLSKLDLSINALTGPIPLGFQY), 385 to 408 (RGLFMLQLFQNSLSGTIPPKLGWY), 409 to 432 (SDLWVLDMSDNHLSGRIPSYLCLH), 433 to 456 (SNMIILNLGTNNLSGNIPTGITTC), 458 to 480 (TLVQLRLARNNLVGRFPSNLCKQ), 481 to 504 (VNVTAIELGQNRFRGSIPREVGNC), 505 to 528 (SALQRLQLADNGFTGELPREIGML), 529 to 552 (SQLGTLNISSNKLTGEVPSEIFNC), 554 to 576 (MLQRLDMCCNNFSGTLPSEVGSL), 577 to 602 (YQLELLKLSNNNLSGTIPVALGNLSR), 604 to 624 (TELQMGGNLFNGSIPRELGSL), 625 to 649 (TGLQIALNLSYNKLTGEIPPELSNL), 651 to 672 (MLEFLLLNNNNLSGEIPSSFAN), and 674 to 700 (SSLLGYNFSYNSLTGPIPLLRNISMSS). Asparagine 180 carries an N-linked (GlcNAc...) asparagine glycan. N-linked (GlcNAc...) asparagine glycosylation occurs at asparagine 263. 2 N-linked (GlcNAc...) asparagine glycosylation sites follow: asparagine 302 and asparagine 311. A glycan (N-linked (GlcNAc...) asparagine) is linked at asparagine 362. Asparagine 444 carries an N-linked (GlcNAc...) asparagine glycan. Residues asparagine 482 and asparagine 503 are each glycosylated (N-linked (GlcNAc...) asparagine). 10 N-linked (GlcNAc...) asparagine glycosylation sites follow: asparagine 535, asparagine 564, asparagine 588, asparagine 599, asparagine 614, asparagine 632, asparagine 661, asparagine 672, asparagine 680, and asparagine 695. A helical transmembrane segment spans residues 738–758 (IIAITAAVIGGVSLMLIALIV). At 759-1102 (YLMRRPVRTV…TEELTQTTTP (344 aa)) the chain is on the cytoplasmic side. A phosphothreonine mark is found at threonine 793 and threonine 801. In terms of domain architecture, Protein kinase spans 804-1091 (FDESFVVGRG…ERSEGEQEHL (288 aa)). Residues 810–818 (VGRGACGTV) and lysine 832 each bind ATP. Tyrosine 882 and tyrosine 919 each carry phosphotyrosine. Catalysis depends on aspartate 932, which acts as the Proton acceptor. A Phosphoserine modification is found at serine 966. Phosphotyrosine is present on residues tyrosine 974 and tyrosine 981. Position 982 is a phosphothreonine (threonine 982).

The protein belongs to the protein kinase superfamily. Ser/Thr protein kinase family.

The protein resides in the cell membrane. It catalyses the reaction L-seryl-[protein] + ATP = O-phospho-L-seryl-[protein] + ADP + H(+). It carries out the reaction L-threonyl-[protein] + ATP = O-phospho-L-threonyl-[protein] + ADP + H(+). This is Probable leucine-rich repeat receptor-like protein kinase At5g63930 from Arabidopsis thaliana (Mouse-ear cress).